Reading from the N-terminus, the 154-residue chain is Ribosome maturation factor RimP (154 aa).

This sequence belongs to the RimP family.

Its subcellular location is the cytoplasm. Functionally, required for maturation of 30S ribosomal subunits. The polypeptide is Ribosome maturation factor RimP (Heliobacterium modesticaldum (strain ATCC 51547 / Ice1)).